A 260-amino-acid chain; its full sequence is Meiotic recombination protein rec6 (260 aa).

Residues 197-222 (QYSESSLLDDSQLLCSSPPVDSTEEA) are disordered. Residues 199 to 213 (SESSLLDDSQLLCSS) are compositionally biased toward low complexity.

It belongs to the TOP6B-like family. As to quaternary structure, component of the DSB catalytic core (DSBC) complex, composed of at least rec12, rec6 and rec14. The complex interacts with mde2.

Functionally, required for formation of the rec12-mediated double-strand breaks (DSBs) that initiate meiotic recombination. May be involved primarily in the early steps of meiotic recombination. The protein is Meiotic recombination protein rec6 of Schizosaccharomyces pombe (strain 972 / ATCC 24843) (Fission yeast).